A 1255-amino-acid polypeptide reads, in one-letter code: DNA-directed RNA polymerase subunit beta' (1255 aa).

Positions 68, 70, 83, and 86 each coordinate Zn(2+). Mg(2+) is bound by residues D457, D459, and D461. Zn(2+)-binding residues include C803, C885, C892, and C895. The segment covering 1220-1240 has biased composition (acidic residues); sequence NSDEEVSFTEDEYFEDEENDL. Residues 1220–1255 are disordered; the sequence is NSDEEVSFTEDEYFEDEENDLSTENFDDLKFSEEEE. A compositionally biased stretch (basic and acidic residues) spans 1246–1255; sequence DDLKFSEEEE.

It belongs to the RNA polymerase beta' chain family. As to quaternary structure, the RNAP catalytic core consists of 2 alpha, 1 beta, 1 beta' and 1 omega subunit. When a sigma factor is associated with the core the holoenzyme is formed, which can initiate transcription. It depends on Mg(2+) as a cofactor. The cofactor is Zn(2+).

The catalysed reaction is RNA(n) + a ribonucleoside 5'-triphosphate = RNA(n+1) + diphosphate. Functionally, DNA-dependent RNA polymerase catalyzes the transcription of DNA into RNA using the four ribonucleoside triphosphates as substrates. In Lachnoclostridium phytofermentans (strain ATCC 700394 / DSM 18823 / ISDg) (Clostridium phytofermentans), this protein is DNA-directed RNA polymerase subunit beta'.